Reading from the N-terminus, the 734-residue chain is Photosystem I P700 chlorophyll a apoprotein A2 (734 aa).

8 helical membrane-spanning segments follow: residues 46 to 69 (IFAS…FHVA), 135 to 158 (LYTG…LHLQ), 175 to 199 (LNHH…HVAI), 273 to 291 (IAHH…GHMY), 330 to 353 (IHFQ…QHMY), 369 to 395 (AALY…IFFI), 417 to 439 (AIIS…LYVH), and 517 to 535 (FLVH…LILV). 2 residues coordinate [4Fe-4S] cluster: cysteine 559 and cysteine 568. Helical transmembrane passes span 575–596 (AFYL…YWHW) and 643–665 (LSVW…MFLI). Histidine 654, methionine 662, and tyrosine 670 together coordinate chlorophyll a. Tryptophan 671 contributes to the phylloquinone binding site. Residues 707 to 727 (LVGLAHFSVGYIFTYAAFLIA) traverse the membrane as a helical segment.

This sequence belongs to the PsaA/PsaB family. As to quaternary structure, the PsaA/B heterodimer binds the P700 chlorophyll special pair and subsequent electron acceptors. PSI consists of a core antenna complex that captures photons, and an electron transfer chain that converts photonic excitation into a charge separation. The eukaryotic PSI reaction center is composed of at least 11 subunits. P700 is a chlorophyll a/chlorophyll a' dimer, A0 is one or more chlorophyll a, A1 is one or both phylloquinones and FX is a shared 4Fe-4S iron-sulfur center. is required as a cofactor.

It is found in the plastid. The protein localises to the chloroplast thylakoid membrane. It carries out the reaction reduced [plastocyanin] + hnu + oxidized [2Fe-2S]-[ferredoxin] = oxidized [plastocyanin] + reduced [2Fe-2S]-[ferredoxin]. PsaA and PsaB bind P700, the primary electron donor of photosystem I (PSI), as well as the electron acceptors A0, A1 and FX. PSI is a plastocyanin-ferredoxin oxidoreductase, converting photonic excitation into a charge separation, which transfers an electron from the donor P700 chlorophyll pair to the spectroscopically characterized acceptors A0, A1, FX, FA and FB in turn. Oxidized P700 is reduced on the lumenal side of the thylakoid membrane by plastocyanin. The chain is Photosystem I P700 chlorophyll a apoprotein A2 from Aethionema grandiflorum (Persian stone-cress).